We begin with the raw amino-acid sequence, 309 residues long: Aspartate carbamoyltransferase catalytic subunit (309 aa).

The carbamoyl phosphate site is built by Arg-55 and Thr-56. Lys-85 serves as a coordination point for L-aspartate. The carbamoyl phosphate site is built by Arg-106, His-135, and Gln-138. L-aspartate contacts are provided by Arg-168 and Arg-230. 2 residues coordinate carbamoyl phosphate: Leu-268 and Pro-269.

The protein belongs to the aspartate/ornithine carbamoyltransferase superfamily. ATCase family. Heterododecamer (2C3:3R2) of six catalytic PyrB chains organized as two trimers (C3), and six regulatory PyrI chains organized as three dimers (R2).

It catalyses the reaction carbamoyl phosphate + L-aspartate = N-carbamoyl-L-aspartate + phosphate + H(+). It participates in pyrimidine metabolism; UMP biosynthesis via de novo pathway; (S)-dihydroorotate from bicarbonate: step 2/3. Functionally, catalyzes the condensation of carbamoyl phosphate and aspartate to form carbamoyl aspartate and inorganic phosphate, the committed step in the de novo pyrimidine nucleotide biosynthesis pathway. In Photobacterium profundum (strain SS9), this protein is Aspartate carbamoyltransferase catalytic subunit.